Here is a 313-residue protein sequence, read N- to C-terminus: Olfactory receptor 1G1 (313 aa).

Topologically, residues 1 to 25 (MEGKNLTSISEFFLLGFSEQLEEQK) are extracellular. Asn-5 is a glycosylation site (N-linked (GlcNAc...) asparagine). The helical transmembrane segment at 26–49 (ALFGSFLFMYLVMVAGNLLIILVI) threads the bilayer. The Cytoplasmic portion of the chain corresponds to 50–57 (ITDTQLHT). A helical transmembrane segment spans residues 58 to 79 (PMYFFLANLSLADACFVSTTVP). Residues 80 to 100 (KMLANIQIQSQAISYSGCLLQ) are Extracellular-facing. Cys-97 and Cys-189 are disulfide-bonded. A helical transmembrane segment spans residues 101 to 120 (LYFFMLFVMLEAFLLAVMAY). Residues 121–140 (DHYVAICHPLHYILIMSPGL) lie on the Cytoplasmic side of the membrane. A helical transmembrane segment spans residues 141 to 158 (CVFLVSASWIMNALYSLL). The Extracellular segment spans residues 159-196 (HTLLMNSLSFCANHEIPHFFCDIDPLLSLSCADPFTNE). The chain crosses the membrane as a helical span at residues 197–219 (LVIFITGGLTGLICVLCLIISYT). Residues 220–236 (NVFSTILKIPSAQGKRK) lie on the Cytoplasmic side of the membrane. The chain crosses the membrane as a helical span at residues 237 to 259 (AFSTCSSHLSVVSLFXGTSFCVY). Residues 260–272 (FSPPSTRXAQKDT) lie on the Extracellular side of the membrane. Residues 273–292 (VASVMYTVVTPMLNPFIYSL) traverse the membrane as a helical segment. The Cytoplasmic segment spans residues 293–313 (RNQEIKSSLRKLIWVRKIHSP).

It belongs to the G-protein coupled receptor 1 family.

It localises to the cell membrane. Its function is as follows. Odorant receptor. The chain is Olfactory receptor 1G1 (OR1G1) from Pan troglodytes (Chimpanzee).